Consider the following 418-residue polypeptide: Putative ion-transport protein YfeO (418 aa).

Helical transmembrane passes span 10-30, 54-74, 99-119, 120-140, 149-169, 186-206, 223-243, 258-278, 300-320, 322-342, 343-363, and 371-391; these read LLLS…LIVV, DSPF…GLVI, ALPG…SLGP, EHPI…RLLP, ILAS…AALI, LFAP…FFHP, ILSG…AVWC, VLML…AGPV, DYFL…ASGF, GGRI…LHEH, VPAV…VLVV, and LFMA…CIVM.

The protein belongs to the chloride channel (TC 2.A.49) family.

It localises to the cell membrane. The sequence is that of Putative ion-transport protein YfeO from Escherichia coli (strain SMS-3-5 / SECEC).